Reading from the N-terminus, the 211-residue chain is Histidine biosynthesis bifunctional protein HisIE (211 aa).

The tract at residues 1-117 (MSTQTNTKSD…CWLDGNAHPF (117 aa)) is phosphoribosyl-AMP cyclohydrolase. Residues 118–211 (LNNLAELIAS…LARHQKAQRK (94 aa)) form a phosphoribosyl-ATP pyrophosphohydrolase region.

It in the N-terminal section; belongs to the PRA-CH family. The protein in the C-terminal section; belongs to the PRA-PH family.

It is found in the cytoplasm. The enzyme catalyses 1-(5-phospho-beta-D-ribosyl)-ATP + H2O = 1-(5-phospho-beta-D-ribosyl)-5'-AMP + diphosphate + H(+). It carries out the reaction 1-(5-phospho-beta-D-ribosyl)-5'-AMP + H2O = 1-(5-phospho-beta-D-ribosyl)-5-[(5-phospho-beta-D-ribosylamino)methylideneamino]imidazole-4-carboxamide. It participates in amino-acid biosynthesis; L-histidine biosynthesis; L-histidine from 5-phospho-alpha-D-ribose 1-diphosphate: step 2/9. The protein operates within amino-acid biosynthesis; L-histidine biosynthesis; L-histidine from 5-phospho-alpha-D-ribose 1-diphosphate: step 3/9. The polypeptide is Histidine biosynthesis bifunctional protein HisIE (Shewanella oneidensis (strain ATCC 700550 / JCM 31522 / CIP 106686 / LMG 19005 / NCIMB 14063 / MR-1)).